The primary structure comprises 201 residues: Holliday junction branch migration complex subunit RuvA (201 aa).

Residues 1–64 are domain I; the sequence is MIGRLRGTLA…EDAQLLYGFA (64 aa). The tract at residues 65–143 is domain II; sequence EKRERELFRE…AWESMPAIAT (79 aa). The interval 144-152 is flexible linker; it reads LVVEPGSKT. The interval 153–201 is domain III; that stretch reads AVTSAENDAVSALISLGFKPQEASRAVSAIQEENLSSEEMIRRALKGMV.

This sequence belongs to the RuvA family. As to quaternary structure, homotetramer. Forms an RuvA(8)-RuvB(12)-Holliday junction (HJ) complex. HJ DNA is sandwiched between 2 RuvA tetramers; dsDNA enters through RuvA and exits via RuvB. An RuvB hexamer assembles on each DNA strand where it exits the tetramer. Each RuvB hexamer is contacted by two RuvA subunits (via domain III) on 2 adjacent RuvB subunits; this complex drives branch migration. In the full resolvosome a probable DNA-RuvA(4)-RuvB(12)-RuvC(2) complex forms which resolves the HJ.

Its subcellular location is the cytoplasm. The RuvA-RuvB-RuvC complex processes Holliday junction (HJ) DNA during genetic recombination and DNA repair, while the RuvA-RuvB complex plays an important role in the rescue of blocked DNA replication forks via replication fork reversal (RFR). RuvA specifically binds to HJ cruciform DNA, conferring on it an open structure. The RuvB hexamer acts as an ATP-dependent pump, pulling dsDNA into and through the RuvAB complex. HJ branch migration allows RuvC to scan DNA until it finds its consensus sequence, where it cleaves and resolves the cruciform DNA. The protein is Holliday junction branch migration complex subunit RuvA of Stutzerimonas stutzeri (strain A1501) (Pseudomonas stutzeri).